The following is a 240-amino-acid chain: UDP-2,3-diacylglucosamine hydrolase (240 aa).

5 residues coordinate Mn(2+): Asp-9, His-11, Asp-43, Asn-81, and His-116. 81–82 (NR) provides a ligand contact to substrate. Residues Asp-124, Ser-162, Lys-166, Lys-169, and His-197 each coordinate substrate. Mn(2+) is bound by residues His-197 and His-199.

This sequence belongs to the LpxH family. The cofactor is Mn(2+).

The protein localises to the cell inner membrane. It carries out the reaction UDP-2-N,3-O-bis[(3R)-3-hydroxytetradecanoyl]-alpha-D-glucosamine + H2O = 2-N,3-O-bis[(3R)-3-hydroxytetradecanoyl]-alpha-D-glucosaminyl 1-phosphate + UMP + 2 H(+). It participates in glycolipid biosynthesis; lipid IV(A) biosynthesis; lipid IV(A) from (3R)-3-hydroxytetradecanoyl-[acyl-carrier-protein] and UDP-N-acetyl-alpha-D-glucosamine: step 4/6. In terms of biological role, hydrolyzes the pyrophosphate bond of UDP-2,3-diacylglucosamine to yield 2,3-diacylglucosamine 1-phosphate (lipid X) and UMP by catalyzing the attack of water at the alpha-P atom. Involved in the biosynthesis of lipid A, a phosphorylated glycolipid that anchors the lipopolysaccharide to the outer membrane of the cell. This chain is UDP-2,3-diacylglucosamine hydrolase, found in Neisseria gonorrhoeae (strain ATCC 700825 / FA 1090).